The primary structure comprises 497 residues: Glycerol kinase 2 (497 aa).

Thr13 provides a ligand contact to ADP. The ATP site is built by Thr13, Thr14, and Ser15. Thr13 contacts sn-glycerol 3-phosphate. Residue Arg17 coordinates ADP. Sn-glycerol 3-phosphate contacts are provided by Arg83, Glu84, Tyr134, and Asp241. Glycerol contacts are provided by Arg83, Glu84, Tyr134, Asp241, and Gln242. Positions 263 and 305 each coordinate ADP. 4 residues coordinate ATP: Thr263, Gly305, Gln309, and Gly406. The ADP site is built by Gly406 and Asn410.

The protein belongs to the FGGY kinase family.

The enzyme catalyses glycerol + ATP = sn-glycerol 3-phosphate + ADP + H(+). Its pathway is polyol metabolism; glycerol degradation via glycerol kinase pathway; sn-glycerol 3-phosphate from glycerol: step 1/1. Functionally, key enzyme in the regulation of glycerol uptake and metabolism. Catalyzes the phosphorylation of glycerol to yield sn-glycerol 3-phosphate. In Sulfolobus acidocaldarius (strain ATCC 33909 / DSM 639 / JCM 8929 / NBRC 15157 / NCIMB 11770), this protein is Glycerol kinase 2.